A 234-amino-acid polypeptide reads, in one-letter code: Synaptogyrin-1 (234 aa).

Position 1 is an N-acetylmethionine (M1). Residues 1-23 (MEGGAYGAGKAGGAFDPYTLVRQ) lie on the Cytoplasmic side of the membrane. In terms of domain architecture, MARVEL spans 20-173 (LVRQPHTILR…QAVLAFQRYQ (154 aa)). The chain crosses the membrane as a helical span at residues 24–44 (PHTILRVVSWVFSIVVFGSIV). Topologically, residues 45-71 (NEGYLNNPEEEEEFCIYNRNPNACSYG) are lumenal. The helical transmembrane segment at 72 to 92 (VTVGVLAFLTCLLYLALDVYF) threads the bilayer. Residues 93 to 103 (PQISSVKDRKK) lie on the Cytoplasmic side of the membrane. Residues 104 to 124 (AVLSDIGVSAFWAFFWFVGFC) traverse the membrane as a helical segment. Topologically, residues 125–148 (FLANQWQVSKPKDNPLNEGTDAAR) are lumenal. A helical transmembrane segment spans residues 149-169 (AAIAFSFFSIFTWAGQAVLAF). At 170–234 (QRYQIGADSA…EPQGYQSQGY (65 aa)) the chain is on the cytoplasmic side. Positions 201-234 (EPSAGSDPAGMGGTYQHPANAFDAEPQGYQSQGY) are disordered.

The protein belongs to the synaptogyrin family.

It localises to the cytoplasmic vesicle. It is found in the secretory vesicle. The protein resides in the synaptic vesicle membrane. Its subcellular location is the melanosome. In terms of biological role, may play a role in regulated exocytosis. Modulates the localization of synaptophysin/SYP into synaptic-like microvesicles and may therefore play a role in synaptic-like microvesicle formation and/or maturation. Involved in the regulation of short-term and long-term synaptic plasticity. This is Synaptogyrin-1 from Mus musculus (Mouse).